The chain runs to 108 residues: Protein RnfH (108 aa).

Belongs to the UPF0125 (RnfH) family.

The protein is Protein RnfH of Laribacter hongkongensis (strain HLHK9).